A 282-amino-acid chain; its full sequence is Pantothenate synthetase (282 aa).

30–37 (MGALHAGH) is an ATP binding site. His-37 functions as the Proton donor in the catalytic mechanism. Residue Gln-61 coordinates (R)-pantoate. Position 61 (Gln-61) interacts with beta-alanine. Position 147–150 (147–150 (GEKD)) interacts with ATP. Gln-153 serves as a coordination point for (R)-pantoate. ATP-binding positions include Val-176 and 184 to 187 (LSSR).

Belongs to the pantothenate synthetase family. Homodimer.

It localises to the cytoplasm. It carries out the reaction (R)-pantoate + beta-alanine + ATP = (R)-pantothenate + AMP + diphosphate + H(+). The protein operates within cofactor biosynthesis; (R)-pantothenate biosynthesis; (R)-pantothenate from (R)-pantoate and beta-alanine: step 1/1. Its function is as follows. Catalyzes the condensation of pantoate with beta-alanine in an ATP-dependent reaction via a pantoyl-adenylate intermediate. In Bacteroides thetaiotaomicron (strain ATCC 29148 / DSM 2079 / JCM 5827 / CCUG 10774 / NCTC 10582 / VPI-5482 / E50), this protein is Pantothenate synthetase.